Here is a 512-residue protein sequence, read N- to C-terminus: Acid-sensing ion channel 2 (512 aa).

Topologically, residues 1 to 42 are cytoplasmic; that stretch reads MDLKESPSEGSLQPSSIQIFANTSTLHGIRHIFVYGPLTIRR. A phosphoserine mark is found at Ser8 and Ser11. Residues 43-64 traverse the membrane as a helical segment; it reads VLWAVAFVGSLGLLLVESSERV. Topologically, residues 65–424 are extracellular; that stretch reads SYYFSYQHVT…ETIEQKKAYE (360 aa). Disulfide bonds link Cys92–Cys193, Cys289–Cys364, Cys307–Cys360, Cys311–Cys358, Cys320–Cys342, and Cys322–Cys334. N-linked (GlcNAc...) asparagine glycosylation is found at Asn365 and Asn392. The chain crosses the membrane as a helical span at residues 425–439; it reads VAALLGDIGGQMGLF. The Cytoplasmic segment spans residues 440–512; sequence IGASILTILE…TLGTLEEIAC (73 aa). The GAS motif; ion selectivity filter signature appears at 441–443; it reads GAS.

The protein belongs to the amiloride-sensitive sodium channel (TC 1.A.6) family. ASIC2 subfamily. As to quaternary structure, can form homotrimers. Heterotrimer; forms functional heterotrimers producing channel with different properties. Forms heterotrimers with ASIC1; while ASIC1 determines current amplitude, ASIC2 influences the properties of the current. Forms heterotrimers with ASIC3; resulting in channels with distinct properties. Interacts with STOM; STOM regulates the gating of ASIC2-containing channels. Interacts with PICK1; promotes ASIC3 phosphorylation by PKC and activation of ASIC2/ASIC3 heterotrimers. In terms of tissue distribution, expressed in brain, cerebellum, trigeminal sensory ganglia and also detected in testis.

The protein localises to the cell membrane. The enzyme catalyses Na(+)(in) = Na(+)(out). It catalyses the reaction K(+)(in) = K(+)(out). The catalysed reaction is Li(+)(in) = Li(+)(out). Inhibited by the diuretic drug amiloride. Inhibited by gadolinium ions, the heterotrimer with ASIC3 being more sensitive. Heterotrimer composed of ASIC1 and ASIC2 are inhibited by the snake venom mambalgin-1. In terms of biological role, forms pH-gated trimeric sodium channels that act as postsynaptic excitatory sensors in the nervous system. Upon extracellular acidification, these channels generate rapid, transient inward currents that fully desensitize. Highly selective for sodium, they are permeable to other cations. By forming heterotrimeric channels with ASIC1, could contribute to synaptic plasticity, learning, and memory. Additionally, as acid sensors at nerve terminals, plays a role in mechanosensation and phototransduction. The chain is Acid-sensing ion channel 2 from Homo sapiens (Human).